The following is a 139-amino-acid chain: 6,7-dimethyl-8-ribityllumazine synthase (139 aa).

5-amino-6-(D-ribitylamino)uracil-binding positions include phenylalanine 13, 45–47, and 69–71; these read VFD and AVI. Residue 74-75 participates in (2S)-2-hydroxy-3-oxobutyl phosphate binding; it reads AT. Histidine 77 (proton donor) is an active-site residue. 5-amino-6-(D-ribitylamino)uracil is bound at residue leucine 102. Arginine 117 serves as a coordination point for (2S)-2-hydroxy-3-oxobutyl phosphate.

Belongs to the DMRL synthase family.

It catalyses the reaction (2S)-2-hydroxy-3-oxobutyl phosphate + 5-amino-6-(D-ribitylamino)uracil = 6,7-dimethyl-8-(1-D-ribityl)lumazine + phosphate + 2 H2O + H(+). Its pathway is cofactor biosynthesis; riboflavin biosynthesis; riboflavin from 2-hydroxy-3-oxobutyl phosphate and 5-amino-6-(D-ribitylamino)uracil: step 1/2. In terms of biological role, catalyzes the formation of 6,7-dimethyl-8-ribityllumazine by condensation of 5-amino-6-(D-ribitylamino)uracil with 3,4-dihydroxy-2-butanone 4-phosphate. This is the penultimate step in the biosynthesis of riboflavin. This chain is 6,7-dimethyl-8-ribityllumazine synthase, found in Methanothermobacter thermautotrophicus (strain ATCC 29096 / DSM 1053 / JCM 10044 / NBRC 100330 / Delta H) (Methanobacterium thermoautotrophicum).